Consider the following 541-residue polypeptide: Arginine--tRNA ligase (541 aa).

Positions 119-129 (ANPTGPLHIGH) match the 'HIGH' region motif.

This sequence belongs to the class-I aminoacyl-tRNA synthetase family. As to quaternary structure, monomer.

It is found in the cytoplasm. It carries out the reaction tRNA(Arg) + L-arginine + ATP = L-arginyl-tRNA(Arg) + AMP + diphosphate. In Helicobacter pylori (strain Shi470), this protein is Arginine--tRNA ligase.